The following is a 419-amino-acid chain: Oxamate carbamoyltransferase subunit AllG (419 aa).

The protein belongs to the AllG family. As to quaternary structure, the OXTCase is composed of 3 subunits, AllF, AllG and AllH. Mg(2+) serves as cofactor.

It carries out the reaction oxamate + carbamoyl phosphate = N-carbamoyl-2-oxoglycine + phosphate. Its pathway is nitrogen metabolism; (S)-allantoin degradation. Component of a carbamoyltransferase involved in the anaerobic nitrogen utilization via the assimilation of allantoin. Catalyzes the conversion of oxalurate (N-carbamoyl-2-oxoglycine) to oxamate and carbamoyl phosphate. The chain is Oxamate carbamoyltransferase subunit AllG from Escherichia coli (strain K12).